We begin with the raw amino-acid sequence, 769 residues long: Phosphatidylinositol 4-phosphate 5-kinase 8 (769 aa).

MORN repeat units lie at residues 16–38, 39–61, 62–84, 85–107, 108–130, 131–153, 154–176, and 177–198; these read YSGQ…DGII, YEGD…SGAK, YEGD…DGSV, YAGA…NSDV, YDGS…NGNR, FIGN…NGDL, FNGF…DGGF, and YFGT…AGSK. The segment at 266-289 is disordered; that stretch reads PPRDFMHHGPSSKSARSVDSGQSE. A compositionally biased stretch (polar residues) spans 276–288; sequence SSKSARSVDSGQS. Residues 344–765 enclose the PIPK domain; sequence WNHYLMLNLQ…RFIDFLLKVF (422 aa). Positions 725 to 746 are activation loop; the sequence is YNMKKKVEHTCKSMKYDPMTIS.

The catalysed reaction is a 1,2-diacyl-sn-glycero-3-phospho-(1D-myo-inositol 4-phosphate) + ATP = a 1,2-diacyl-sn-glycero-3-phospho-(1D-myo-inositol-4,5-bisphosphate) + ADP + H(+). In Arabidopsis thaliana (Mouse-ear cress), this protein is Phosphatidylinositol 4-phosphate 5-kinase 8 (PIP5K8).